The primary structure comprises 173 residues: MAKRRKSSRTKEKETNWQERVIQIRRVSKVVKGGKKLSFRAIVVVGNETGQVGVGVGKAGDVIGAVRKGVADGKKQLIEVPLTKASSIPHLTNGASGGASVIMRPAAPGTGVIAGGAVRTVLELAGVKNILAKQLGSDNPLNNARAAINALETLRTFSEVAKERDVPLEHIYS.

The S5 DRBM domain maps to 17–80 (WQERVIQIRR…ADGKKQLIEV (64 aa)).

It belongs to the universal ribosomal protein uS5 family. As to quaternary structure, part of the 30S ribosomal subunit. Contacts proteins S4 and S8.

Its function is as follows. With S4 and S12 plays an important role in translational accuracy. Located at the back of the 30S subunit body where it stabilizes the conformation of the head with respect to the body. This Gloeothece citriformis (strain PCC 7424) (Cyanothece sp. (strain PCC 7424)) protein is Small ribosomal subunit protein uS5.